Reading from the N-terminus, the 293-residue chain is Acetylglutamate kinase (293 aa).

Residues 68 to 69 (GG), Arg-90, and Asn-189 contribute to the substrate site.

This sequence belongs to the acetylglutamate kinase family. ArgB subfamily.

Its subcellular location is the cytoplasm. It carries out the reaction N-acetyl-L-glutamate + ATP = N-acetyl-L-glutamyl 5-phosphate + ADP. It functions in the pathway amino-acid biosynthesis; L-arginine biosynthesis; N(2)-acetyl-L-ornithine from L-glutamate: step 2/4. Catalyzes the ATP-dependent phosphorylation of N-acetyl-L-glutamate. The protein is Acetylglutamate kinase of Caldicellulosiruptor bescii (strain ATCC BAA-1888 / DSM 6725 / KCTC 15123 / Z-1320) (Anaerocellum thermophilum).